Reading from the N-terminus, the 226-residue chain is ATP synthase F(0) complex subunit a (226 aa).

6 helical membrane-spanning segments follow: residues 6–26 (FASF…IILF), 68–88 (WSLM…LGLL), 97–117 (QLSM…VMGF), 138–158 (IPML…ALAV), 164–184 (ITAG…LSTI), and 189–209 (TLII…VALI).

It belongs to the ATPase A chain family. As to quaternary structure, component of the ATP synthase complex composed at least of ATP5F1A/subunit alpha, ATP5F1B/subunit beta, ATP5MC1/subunit c (homooctomer), MT-ATP6/subunit a, MT-ATP8/subunit 8, ATP5ME/subunit e, ATP5MF/subunit f, ATP5MG/subunit g, ATP5MK/subunit k, ATP5MJ/subunit j, ATP5F1C/subunit gamma, ATP5F1D/subunit delta, ATP5F1E/subunit epsilon, ATP5PF/subunit F6, ATP5PB/subunit b, ATP5PD/subunit d, ATP5PO/subunit OSCP. ATP synthase complex consists of a soluble F(1) head domain (subunits alpha(3) and beta(3)) - the catalytic core - and a membrane F(0) domain - the membrane proton channel (subunits c, a, 8, e, f, g, k and j). These two domains are linked by a central stalk (subunits gamma, delta, and epsilon) rotating inside the F1 region and a stationary peripheral stalk (subunits F6, b, d, and OSCP). Interacts with DNAJC30; interaction is direct.

It is found in the mitochondrion inner membrane. The enzyme catalyses H(+)(in) = H(+)(out). In terms of biological role, subunit a, of the mitochondrial membrane ATP synthase complex (F(1)F(0) ATP synthase or Complex V) that produces ATP from ADP in the presence of a proton gradient across the membrane which is generated by electron transport complexes of the respiratory chain. ATP synthase complex consist of a soluble F(1) head domain - the catalytic core - and a membrane F(1) domain - the membrane proton channel. These two domains are linked by a central stalk rotating inside the F(1) region and a stationary peripheral stalk. During catalysis, ATP synthesis in the catalytic domain of F(1) is coupled via a rotary mechanism of the central stalk subunits to proton translocation. With the subunit c (ATP5MC1), forms the proton-conducting channel in the F(0) domain, that contains two crucial half-channels (inlet and outlet) that facilitate proton movement from the mitochondrial intermembrane space (IMS) into the matrix. Protons are taken up via the inlet half-channel and released through the outlet half-channel, following a Grotthuss mechanism. In Pan paniscus (Pygmy chimpanzee), this protein is ATP synthase F(0) complex subunit a.